We begin with the raw amino-acid sequence, 394 residues long: Ketoisovalerate oxidoreductase subunit VorA (394 aa).

As to quaternary structure, heterotetramer of one alpha, one beta, one delta and one gamma chain.

The catalysed reaction is 3-methyl-2-oxobutanoate + 2 oxidized [2Fe-2S]-[ferredoxin] + CoA = 2-methylpropanoyl-CoA + 2 reduced [2Fe-2S]-[ferredoxin] + CO2 + H(+). The protein is Ketoisovalerate oxidoreductase subunit VorA (vorA) of Pyrococcus furiosus (strain ATCC 43587 / DSM 3638 / JCM 8422 / Vc1).